We begin with the raw amino-acid sequence, 1116 residues long: Error-prone DNA polymerase 1 (1116 aa).

This sequence belongs to the DNA polymerase type-C family. DnaE2 subfamily.

It localises to the cytoplasm. The enzyme catalyses DNA(n) + a 2'-deoxyribonucleoside 5'-triphosphate = DNA(n+1) + diphosphate. Functionally, DNA polymerase involved in damage-induced mutagenesis and translesion synthesis (TLS). It is not the major replicative DNA polymerase. The chain is Error-prone DNA polymerase 1 from Rhizobium meliloti (strain 1021) (Ensifer meliloti).